Here is a 258-residue protein sequence, read N- to C-terminus: Ditrans,polycis-undecaprenyl-diphosphate synthase ((2E,6E)-farnesyl-diphosphate specific) (258 aa).

Asp-24 is an active-site residue. Asp-24 contacts Mg(2+). Residues 25–28 (GNGR), Trp-29, Arg-37, His-41, and 69–71 (SSE) contribute to the substrate site. Asn-72 functions as the Proton acceptor in the catalytic mechanism. Substrate contacts are provided by residues Trp-73, Arg-75, Arg-192, and 198–200 (RIS). Residue Glu-211 participates in Mg(2+) binding.

This sequence belongs to the UPP synthase family. As to quaternary structure, homodimer. Mg(2+) serves as cofactor.

The catalysed reaction is 8 isopentenyl diphosphate + (2E,6E)-farnesyl diphosphate = di-trans,octa-cis-undecaprenyl diphosphate + 8 diphosphate. Catalyzes the sequential condensation of isopentenyl diphosphate (IPP) with (2E,6E)-farnesyl diphosphate (E,E-FPP) to yield (2Z,6Z,10Z,14Z,18Z,22Z,26Z,30Z,34E,38E)-undecaprenyl diphosphate (di-trans,octa-cis-UPP). UPP is the precursor of glycosyl carrier lipid in the biosynthesis of bacterial cell wall polysaccharide components such as peptidoglycan and lipopolysaccharide. The protein is Ditrans,polycis-undecaprenyl-diphosphate synthase ((2E,6E)-farnesyl-diphosphate specific) of Xanthomonas campestris pv. campestris (strain ATCC 33913 / DSM 3586 / NCPPB 528 / LMG 568 / P 25).